A 373-amino-acid polypeptide reads, in one-letter code: Flagellar P-ring protein 1 (373 aa).

Positions 1-25 (MKPINTFFSSFLLALTLGLPATSQA) are cleaved as a signal peptide.

Belongs to the FlgI family. As to quaternary structure, the basal body constitutes a major portion of the flagellar organelle and consists of four rings (L,P,S, and M) mounted on a central rod.

It localises to the periplasm. Its subcellular location is the bacterial flagellum basal body. Assembles around the rod to form the L-ring and probably protects the motor/basal body from shearing forces during rotation. The polypeptide is Flagellar P-ring protein 1 (Vibrio parahaemolyticus serotype O3:K6 (strain RIMD 2210633)).